Reading from the N-terminus, the 249-residue chain is Zinc finger AN1 and C2H2 domain-containing stress-associated protein 13 (249 aa).

AN1-type zinc fingers lie at residues 7 to 55 (PDLG…RGDV) and 95 to 145 (AVKK…KPES). Positions 13, 18, 28, 31, 36, 39, 45, 47, 101, 106, 118, 121, 126, 129, 135, and 137 each coordinate Zn(2+). The disordered stretch occupies residues 194 to 213 (FASGNDGNSEKTQERNGKQN). Over residues 201–210 (NSEKTQERNG) the composition is skewed to basic and acidic residues. Residues 220–243 (DVCPKCSRGFRDPVDLLKHIDKDH) form a C2H2-type zinc finger.

Its function is as follows. May be involved in environmental stress response. This is Zinc finger AN1 and C2H2 domain-containing stress-associated protein 13 (SAP13) from Arabidopsis thaliana (Mouse-ear cress).